The chain runs to 404 residues: tRNA pseudouridine(31) synthase (404 aa).

The active site involves D168.

This sequence belongs to the pseudouridine synthase RluA family.

It localises to the cytoplasm. It is found in the mitochondrion. The catalysed reaction is uridine(31) in tRNA = pseudouridine(31) in tRNA. Its function is as follows. Catalyzes the formation of pseudouridine at position 31 in the psi GC loop of tRNAS. This is tRNA pseudouridine(31) synthase (PUS6) from Saccharomyces cerevisiae (strain ATCC 204508 / S288c) (Baker's yeast).